A 142-amino-acid polypeptide reads, in one-letter code: Mediator of RNA polymerase II transcription subunit 9 (142 aa).

The disordered stretch occupies residues 1–58; that stretch reads MASSGVAGGRQAEDTLQPPPELLPESKPPPPPQPLPVAALPPPAAPRPQSPAGAKEEN. A2 is subject to N-acetylalanine. Positions 17–49 are enriched in pro residues; the sequence is QPPPELLPESKPPPPPQPLPVAALPPPAAPRPQ. The stretch at 78–134 forms a coiled coil; that stretch reads DLHQDLNALKTKFQELRKLIGTMPGIHVSPEQQQQQLHSLREQVRTKNELLQKYKSL. S106 carries the phosphoserine modification.

It belongs to the Mediator complex subunit 9 family. As to quaternary structure, component of the Mediator complex, which is composed of MED1, MED4, MED6, MED7, MED8, MED9, MED10, MED11, MED12, MED13, MED13L, MED14, MED15, MED16, MED17, MED18, MED19, MED20, MED21, MED22, MED23, MED24, MED25, MED26, MED27, MED29, MED30, MED31, CCNC, CDK8 and CDC2L6/CDK11. The MED12, MED13, CCNC and CDK8 subunits form a distinct module termed the CDK8 module. Mediator containing the CDK8 module is less active than Mediator lacking this module in supporting transcriptional activation. Individual preparations of the Mediator complex lacking one or more distinct subunits have been variously termed ARC, CRSP, DRIP, PC2, SMCC and TRAP.

The protein resides in the nucleus. In terms of biological role, component of the Mediator complex, a coactivator involved in the regulated transcription of nearly all RNA polymerase II-dependent genes. Mediator functions as a bridge to convey information from gene-specific regulatory proteins to the basal RNA polymerase II transcription machinery. Mediator is recruited to promoters by direct interactions with regulatory proteins and serves as a scaffold for the assembly of a functional preinitiation complex with RNA polymerase II and the general transcription factors. The polypeptide is Mediator of RNA polymerase II transcription subunit 9 (Med9) (Mus musculus (Mouse)).